We begin with the raw amino-acid sequence, 217 residues long: MAHDQPLLVVQEALRKCFPVVEEQQNLWQSTLQDCSPLLSSLSNLAEQLQAAQSLRFEDVPALRPFPDLQERLRRKQLEAGDVVLDKLAERLATLLKVRNTINSHVEQVFQAYEQHAAVLDIDTVLRPSVVSPSVADMLEWLQDIDRHYGSSYLKRKYLLSSIHWGDLASIQALPKAWDQISENECQTLVSDVLVSVSFFLEEPGGCAASGDLEHHS.

In terms of assembly, part of the 55LCC heterohexameric ATPase complex composed at least of AIRIM, AFG2A, AFG2B and CINP. Does not associate with pre-60S ribosomal particles. Post-translationally, phosphorylated on serines by CK2 kinase.

Its subcellular location is the nucleus. It is found in the cytoplasm. In terms of biological role, part of the 55LCC heterohexameric ATPase complex which is chromatin-associated and promotes replisome proteostasis to maintain replication fork progression and genome stability. Required for replication fork progression, sister chromatid cohesion, and chromosome stability. The ATPase activity is specifically enhanced by replication fork DNA and is coupled to cysteine protease-dependent cleavage of replisome substrates in response to replication fork damage. Uses ATPase activity to process replisome substrates in S-phase, facilitating their proteolytic turnover from chromatin to ensure DNA replication and mitotic fidelity. Involved in the cytoplasmic maturation steps of pre-60S ribosomal particles by promoting the release of shuttling protein RSL24D1/RLP24 from the pre-ribosomal particles. This Mus musculus (Mouse) protein is AFG2-interacting ribosome maturation factor (Airim).